Here is a 1081-residue protein sequence, read N- to C-terminus: DNA polymerase delta catalytic subunit (1081 aa).

The disordered stretch occupies residues 1-22; sequence MTSKRPGGSSFQPEVKRKRESD. Zn(2+)-binding residues include C981, C984, C998, and C1001. A CysA-type zinc finger spans residues 981 to 1001; sequence CLGCKSVLPRAESENAVCKHC. The [4Fe-4S] cluster site is built by C1030, C1033, C1043, and C1048. Residues 1030 to 1048 carry the CysB motif motif; the sequence is CQNCAKTMQDKVNCSARDC.

This sequence belongs to the DNA polymerase type-B family. Heterodimer with subunits of 125 kDa and 50 kDa. The 125 kDa subunit contains the polymerase active site and most likely the active site for the 3'-5' exonuclease activity. Requires [4Fe-4S] cluster as cofactor.

It is found in the nucleus. It catalyses the reaction DNA(n) + a 2'-deoxyribonucleoside 5'-triphosphate = DNA(n+1) + diphosphate. Possesses two enzymatic activities: DNA synthesis (polymerase) and an exonucleolytic activity that degrades single stranded DNA in the 3'- to 5'-direction. Required with its accessory proteins (proliferating cell nuclear antigen (PCNA) and replication factor C (RFC) or activator 1) for leading strand synthesis. Also involved in completing Okazaki fragments initiated by the DNA polymerase alpha/primase complex. The chain is DNA polymerase delta catalytic subunit from Caenorhabditis elegans.